Here is a 136-residue protein sequence, read N- to C-terminus: Small ribosomal subunit protein uS9 (136 aa).

Positions 95-136 are disordered; that stretch reads GLSPDNRKPLKTEGHLSRDPRSKERKKYGLKKARKAGQFSKR. Over residues 99-116 the composition is skewed to basic and acidic residues; that stretch reads DNRKPLKTEGHLSRDPRS. Positions 117 to 136 are enriched in basic residues; the sequence is KERKKYGLKKARKAGQFSKR.

This sequence belongs to the universal ribosomal protein uS9 family.

In Prochlorococcus marinus subsp. pastoris (strain CCMP1986 / NIES-2087 / MED4), this protein is Small ribosomal subunit protein uS9.